Here is a 306-residue protein sequence, read N- to C-terminus: Proteasome subunit beta (306 aa).

The propeptide at 1–67 (MTWPNRDQPA…GLPTDAVPHG (67 aa)) is removed in mature form; by autocatalysis. The active-site Nucleophile is the T68.

The protein belongs to the peptidase T1B family. In terms of assembly, the 20S proteasome core is composed of 14 alpha and 14 beta subunits that assemble into four stacked heptameric rings, resulting in a barrel-shaped structure. The two inner rings, each composed of seven catalytic beta subunits, are sandwiched by two outer rings, each composed of seven alpha subunits. The catalytic chamber with the active sites is on the inside of the barrel. Has a gated structure, the ends of the cylinder being occluded by the N-termini of the alpha-subunits. Is capped by the proteasome-associated ATPase, ARC.

Its subcellular location is the cytoplasm. It carries out the reaction Cleavage of peptide bonds with very broad specificity.. It participates in protein degradation; proteasomal Pup-dependent pathway. The formation of the proteasomal ATPase ARC-20S proteasome complex, likely via the docking of the C-termini of ARC into the intersubunit pockets in the alpha-rings, may trigger opening of the gate for substrate entry. Interconversion between the open-gate and close-gate conformations leads to a dynamic regulation of the 20S proteasome proteolysis activity. Its function is as follows. Component of the proteasome core, a large protease complex with broad specificity involved in protein degradation. This is Proteasome subunit beta from Mycolicibacterium vanbaalenii (strain DSM 7251 / JCM 13017 / BCRC 16820 / KCTC 9966 / NRRL B-24157 / PYR-1) (Mycobacterium vanbaalenii).